Consider the following 78-residue polypeptide: ATP synthase subunit a (78 aa).

A run of 3 helical transmembrane segments spans residues 13-33 (LFGN…LGTS), 35-55 (FLGA…GMFI), and 57-77 (SLQA…KVEA).

It belongs to the ATPase A chain family. In terms of assembly, F-type ATPases have 2 components, CF(1) - the catalytic core - and CF(0) - the membrane proton channel. CF(1) has five subunits: alpha(3), beta(3), gamma(1), delta(1), epsilon(1). CF(0) has three main subunits: a(1), b(2) and c(9-12). The alpha and beta chains form an alternating ring which encloses part of the gamma chain. CF(1) is attached to CF(0) by a central stalk formed by the gamma and epsilon chains, while a peripheral stalk is formed by the delta and b chains.

The protein resides in the cell membrane. Its function is as follows. Key component of the proton channel; it plays a direct role in the translocation of protons across the membrane. The chain is ATP synthase subunit a (atpB) from Alkalihalobacillus alcalophilus (Bacillus alcalophilus).